The chain runs to 218 residues: Redox-sensing transcriptional repressor Rex (218 aa).

Positions 25 to 64 (WYLSYVQLLHADGCESVSSTRIARAVGVDASLVAKDLSYV) form a DNA-binding region, H-T-H motif. NAD(+) is bound at residue 99 to 104 (GVGSLG).

The protein belongs to the transcriptional regulatory Rex family. As to quaternary structure, homodimer.

It is found in the cytoplasm. Functionally, modulates transcription in response to changes in cellular NADH/NAD(+) redox state. This Porphyromonas gingivalis (strain ATCC 33277 / DSM 20709 / CIP 103683 / JCM 12257 / NCTC 11834 / 2561) protein is Redox-sensing transcriptional repressor Rex.